A 524-amino-acid polypeptide reads, in one-letter code: GMP synthase [glutamine-hydrolyzing] (524 aa).

The 199-residue stretch at 9-207 (RILILDFGSQ…VIHICQCIPN (199 aa)) folds into the Glutamine amidotransferase type-1 domain. Cys86 (nucleophile) is an active-site residue. Residues His181 and Glu183 contribute to the active site. The GMPS ATP-PPase domain occupies 208-399 (WTTKHIIEDS…LGLPADLIYR (192 aa)). 235-241 (SGGVDSA) is an ATP binding site.

Homodimer.

The catalysed reaction is XMP + L-glutamine + ATP + H2O = GMP + L-glutamate + AMP + diphosphate + 2 H(+). It participates in purine metabolism; GMP biosynthesis; GMP from XMP (L-Gln route): step 1/1. Its function is as follows. Catalyzes the synthesis of GMP from XMP. In Coxiella burnetii (strain RSA 493 / Nine Mile phase I), this protein is GMP synthase [glutamine-hydrolyzing].